Reading from the N-terminus, the 1216-residue chain is MVDVNRFKSMQITLASPSKVRSWSYGEVKKPETINYRTLKPEREGLFDEVIFGPTKDWECACGKYKRIRYKGIICDRCGVEVTRAKVRRERMGHIELKAPVSHIWYFKGIPSRMGLTLDMSPRALEEVIYFAAYVVIDPMDTPLEPKSLLTEREYREKLQEYGYGSFVAKMGAEAIQDLLKRVDLDAEIAVLKEELKSATGQKRVKAVRRLDVLDAFKKSGNKPEWMVLNILPVIPPDLRPMVQLDGGRFAASDLNDLYRRVINRNNRLARLLELNAPGIIVQNEKRMLQEAVDALIDNGRRGRPITGPGSRPLKSLSHMLKGKQGRFRQNLLGKRVDFSGRSVIAVGPTLKMYQCGVPREMAIELFKPFVMREIVARDLAGNVKAAKRMVERGDERIWDILEEVIKEHPVLLNRAPTLHRLGIQAFEPVLIDGKALRLHPLVCEAYNADFDGDQMAIHVPLSEEAQAEARLLMLAAEHILNPKDGKPVVTPSQDMVLGNYYLTMEDAGREGEGMIFKDHDEAVMAYQNGYVHLHTRVGIAVDSMPNKPWTEEQKHKIMVTTVGKILFNDIMPEDLPYLIEPNNANLTEKTPDKYFLEPGQDIQAVIDNLEINIPFKKKNLGNIIAETFKRFRTTETSAFLDRLKDLGYYHSTLAGLTVGIADIPVIDNKAEIIDAAHHRVEDINKAFRRGLMTEEDRYVAVTTTWREAKEALEKRLIETQDPKNPIVMMMDSGARGNISNFSQLAGMRGLMAAPNGRIMELPILSNFREGLSVLEMFFSTHGARKGMTDTALKTADSGYLTRRLVDVAQDVIIREDDCGTDRGLTITAITDGKEVTETLEERLIGRYTKKSIKHPETGEILVGADTLITEDMAAKVVKAGVEEVTIRSVFTCNTRHGVCRHCYGINLATGDAVEVGEAVGTIAAQSIGEPGTQLTMRTFHTGGVASNTDITQGLPRIQEIFEARNPKGEAVITEVKGEVVAIEEDSSTRTKKVFVKGQTGEGEYVVPFTARMKVEVGDEVARGAALTEGSIQPKRLLEVRDTLSVETYLLAEVQKVYRSQGVEIGDKHVEVMVRQMLRKVRVMDPGDTDLLPGTLMDISDFTDANKDIVISGGIPATSRPVLMGITKASLETNSFLSAASFQETTRVLTDAAIRGKKDHLLGLKENVIIGKIIPAGTGMARYRNIEPLAVNEVEIIEGTPVDAEVTEVSTPTTED.

4 residues coordinate Zn(2+): Cys60, Cys62, Cys75, and Cys78. Mg(2+) is bound by residues Asp450, Asp452, and Asp454. Residues Cys819, Cys893, Cys900, and Cys903 each contribute to the Zn(2+) site.

Belongs to the RNA polymerase beta' chain family. As to quaternary structure, the RNAP catalytic core consists of 2 alpha, 1 beta, 1 beta' and 1 omega subunit. When a sigma factor is associated with the core the holoenzyme is formed, which can initiate transcription. The cofactor is Mg(2+). Zn(2+) serves as cofactor.

It carries out the reaction RNA(n) + a ribonucleoside 5'-triphosphate = RNA(n+1) + diphosphate. DNA-dependent RNA polymerase catalyzes the transcription of DNA into RNA using the four ribonucleoside triphosphates as substrates. The chain is DNA-directed RNA polymerase subunit beta' from Streptococcus agalactiae serotype Ia (strain ATCC 27591 / A909 / CDC SS700).